Reading from the N-terminus, the 842-residue chain is Elongation factor 2 (842 aa).

Residues 17 to 346 form the tr-type G domain; sequence TNVRNMSVIA…MIVMHLPSPV (330 aa). GTP contacts are provided by residues 26-33, 158-161, and 213-215; these read AHVDHGKS, NKVD, and SGL. Residue H699 is modified to Diphthamide.

Belongs to the TRAFAC class translation factor GTPase superfamily. Classic translation factor GTPase family. EF-G/EF-2 subfamily.

The protein localises to the cytoplasm. The enzyme catalyses GTP + H2O = GDP + phosphate + H(+). In terms of biological role, catalyzes the GTP-dependent ribosomal translocation step during translation elongation. During this step, the ribosome changes from the pre-translocational (PRE) to the post-translocational (POST) state as the newly formed A-site-bound peptidyl-tRNA and P-site-bound deacylated tRNA move to the P and E sites, respectively. Catalyzes the coordinated movement of the two tRNA molecules, the mRNA and conformational changes in the ribosome. In Candida glabrata (strain ATCC 2001 / BCRC 20586 / JCM 3761 / NBRC 0622 / NRRL Y-65 / CBS 138) (Yeast), this protein is Elongation factor 2 (EFT1).